The chain runs to 145 residues: Large ribosomal subunit protein uL13 (145 aa).

Belongs to the universal ribosomal protein uL13 family. As to quaternary structure, part of the 50S ribosomal subunit.

Its function is as follows. This protein is one of the early assembly proteins of the 50S ribosomal subunit, although it is not seen to bind rRNA by itself. It is important during the early stages of 50S assembly. This Bacillus thuringiensis (strain Al Hakam) protein is Large ribosomal subunit protein uL13.